A 72-amino-acid polypeptide reads, in one-letter code: MEKLIILLLVAAVLMSTQALFQEKRTMKKIDFLSKGKADAEKQRKRNCSDDWQYCESPSDCCSWDCDVVCSG.

Residues 1 to 19 (MEKLIILLLVAAVLMSTQA) form the signal peptide. A propeptide spanning residues 20 to 44 (LFQEKRTMKKIDFLSKGKADAEKQR) is cleaved from the precursor. Intrachain disulfides connect cysteine 48/cysteine 62, cysteine 55/cysteine 66, and cysteine 61/cysteine 70. Position 56 is a 4-carboxyglutamate (glutamate 56). The residue at position 58 (proline 58) is a 4-hydroxyproline. Serine 71 carries the post-translational modification Serine amide.

In terms of processing, brominated at one of the Trp residues. As to expression, expressed by the venom duct.

The protein resides in the secreted. The sequence is that of Conotoxin Gla(2)-TxVI/B from Conus textile (Cloth-of-gold cone).